The sequence spans 592 residues: Aspartate--tRNA(Asp/Asn) ligase (592 aa).

Position 175 (E175) interacts with L-aspartate. The aspartate stretch occupies residues 199–202 (QLFK). Position 221 (R221) interacts with L-aspartate. ATP is bound by residues 221–223 (RDE) and Q230. Position 450 (H450) interacts with L-aspartate. E483 provides a ligand contact to ATP. Residue R490 participates in L-aspartate binding. Residue 535-538 (GLDR) participates in ATP binding.

This sequence belongs to the class-II aminoacyl-tRNA synthetase family. Type 1 subfamily. Homodimer.

The protein resides in the cytoplasm. The catalysed reaction is tRNA(Asx) + L-aspartate + ATP = L-aspartyl-tRNA(Asx) + AMP + diphosphate. In terms of biological role, aspartyl-tRNA synthetase with relaxed tRNA specificity since it is able to aspartylate not only its cognate tRNA(Asp) but also tRNA(Asn). Reaction proceeds in two steps: L-aspartate is first activated by ATP to form Asp-AMP and then transferred to the acceptor end of tRNA(Asp/Asn). This is Aspartate--tRNA(Asp/Asn) ligase from Acinetobacter baylyi (strain ATCC 33305 / BD413 / ADP1).